The primary structure comprises 638 residues: Growth hormone receptor (638 aa).

An N-terminal signal peptide occupies residues 1 to 18 (MDLWQLLLTLALAGSSDA). Topologically, residues 19–264 (FSGSEPTAAI…NQFTCEEDFY (246 aa)) are extracellular. A glycan (N-linked (GlcNAc...) asparagine) is linked at asparagine 46. Disulfide bonds link cysteine 56/cysteine 66 and cysteine 101/cysteine 112. Asparagine 115 carries an N-linked (GlcNAc...) asparagine glycan. The cysteines at positions 126 and 140 are disulfide-linked. Positions 151–254 (PPIALNWTLL…EVLYVTLPQM (104 aa)) constitute a Fibronectin type-III domain. 3 N-linked (GlcNAc...) asparagine glycosylation sites follow: asparagine 156, asparagine 161, and asparagine 200. The WSXWS motif signature appears at 240–244 (YGEFS). Residues 265–288 (FPWLLIIIFGIFGLTVMLFVFLFS) traverse the membrane as a helical segment. Residues 289–638 (KQQRIKMLIL…STDQLNKIMP (350 aa)) are Cytoplasmic-facing. The tract at residues 294–379 (KMLILPPVPV…HQKSHSNLGV (86 aa)) is required for JAK2 binding. Positions 297-305 (ILPPVPVPK) match the Box 1 motif motif. Residues 340 to 349 (DSWVEFIELD) carry the UbE motif motif. Serine 341 bears the Phosphoserine mark. Residues 353-388 (PDEKNEGSDTDRLLSSDHQKSHSNLGVKDGDSGRTS) are disordered. The span at 356 to 372 (KNEGSDTDRLLSSDHQK) shows a compositional bias: basic and acidic residues. A phosphotyrosine mark is found at tyrosine 487 and tyrosine 595.

This sequence belongs to the type I cytokine receptor family. Type 1 subfamily. As to quaternary structure, on growth hormone (GH) binding, forms homodimers and binds JAK2 via a box 1-containing domain. The soluble form (GHBP) is produced by phorbol ester-promoted proteolytic cleavage at the cell surface (shedding) by ADAM17/TACE. Shedding is inhibited by growth hormone (GH) binding to the receptor probably due to a conformational change in GHR rendering the receptor inaccessible to ADAM17. Post-translationally, on GH binding, phosphorylated on tyrosine residues in the cytoplasmic domain by JAK2. In terms of processing, ubiquitinated by the ECS(SOCS2) complex following ligand-binding and phosphorylation by JAK2, leading to its degradation by the proteasome. Regulation by the ECS(SOCS2) complex acts as a negative feedback loop of growth hormone receptor signaling. Ubiquitination is not sufficient for GHR internalization.

It localises to the cell membrane. Its subcellular location is the secreted. Functionally, receptor for pituitary gland growth hormone (GH1) involved in regulating postnatal body growth. On ligand binding, couples to the JAK2/STAT5 pathway. Its function is as follows. The soluble form (GHBP) acts as a reservoir of growth hormone in plasma and may be a modulator/inhibitor of GH signaling. This chain is Growth hormone receptor (GHR), found in Macaca mulatta (Rhesus macaque).